Here is a 174-residue protein sequence, read N- to C-terminus: Rubredoxin-2 (174 aa).

Positions 1–53 (MAKYQCPDCEYIYDEVAGHPHEGFPPGTSWETIPEEWACPDCAVRDKADFVVI) constitute a Rubredoxin-like 1 domain. Residues Cys6, Cys9, Cys39, and Cys42 each contribute to the Fe cation site. The segment covering 56 to 65 (GSASPASGAA) has biased composition (low complexity). The tract at residues 56 to 115 (GSASPASGAATPEVRTATTPPKAEASPQKSTGASTPSANNKAKAKAKAKPARAKSSKDST) is disordered. Over residues 97 to 109 (AKAKAKAKPARAK) the composition is skewed to basic residues. The Rubredoxin-like 2 domain maps to 121–172 (FRKWICITCGHIYDEALGDETEGFAPGTLFEDIPDDWCCPDCGATKEDYVLH). Fe cation-binding residues include Cys126, Cys129, Cys159, and Cys162.

Belongs to the rubredoxin family. Fe(3+) serves as cofactor.

Its subcellular location is the cytoplasm. Its pathway is hydrocarbon metabolism; alkane degradation. In terms of biological role, involved in the hydrocarbon hydroxylating system, which transfers electrons from NADH to rubredoxin reductase and then through rubredoxin to alkane 1 monooxygenase. The sequence is that of Rubredoxin-2 (alkG) from Alcanivorax borkumensis (strain ATCC 700651 / DSM 11573 / NCIMB 13689 / SK2).